Here is a 146-residue protein sequence, read N- to C-terminus: Putative calcium-binding protein CML19 (146 aa).

EF-hand domains lie at 3-38 (AATAEFRRVFSAFDRDADGKISAAELRLCMKAALGE), 40-75 (MSAEEAEALVSSADTDDDGLLDEEEFTKLAVQLEMG), 79-114 (ERCRGLMEAFRMYEMEGEGRITPASLKRMLSKLGSH), and 115-146 (QGIEECQTMICRFDLDGDGVISFEEFKIMMDA). Ca(2+)-binding residues include D16, D18, D20, K22, E27, D53, D55, D57, and E64. 4 residues coordinate Ca(2+): D128, D130, D132, and E139.

Potential calcium sensor. The chain is Putative calcium-binding protein CML19 (CML19) from Oryza sativa subsp. japonica (Rice).